The chain runs to 210 residues: Redox-sensing transcriptional repressor Rex (210 aa).

The segment at residues Ile16–Phe55 is a DNA-binding region (H-T-H motif). An NAD(+)-binding site is contributed by Gly90–Gly95.

The protein belongs to the transcriptional regulatory Rex family. In terms of assembly, homodimer.

It is found in the cytoplasm. In terms of biological role, modulates transcription in response to changes in cellular NADH/NAD(+) redox state. The polypeptide is Redox-sensing transcriptional repressor Rex (Desulforamulus reducens (strain ATCC BAA-1160 / DSM 100696 / MI-1) (Desulfotomaculum reducens)).